The primary structure comprises 457 residues: Methylphosphonate synthase (457 aa).

The HTH cro/C1-type 1 domain occupies Ile-23–Phe-74. Positions Glu-32–Ser-50 form a DNA-binding region, H-T-H motif. The Fe cation site is built by His-148 and His-190. The 55-residue stretch at Leu-247–Leu-301 folds into the HTH cro/C1-type 2 domain. Positions Lys-258–Thr-277 form a DNA-binding region, H-T-H motif.

Belongs to the non-heme iron-dependent dioxygenase family. Requires Fe(2+) as cofactor.

It catalyses the reaction 2-hydroxyethylphosphonate + O2 = methylphosphonate + hydrogencarbonate + H(+). Its pathway is phosphorus metabolism; phosphonate biosynthesis. Functionally, catalyzes the conversion of 2-hydroxyethylphosphonate into methylphosphonate in the methylphosphonate biosynthesis pathway. The protein is Methylphosphonate synthase (mpnS) of Nitrosopumilus maritimus (strain SCM1).